Consider the following 282-residue polypeptide: Pantothenate synthetase (282 aa).

Residue 30-37 (MGYLHEGH) participates in ATP binding. Residue His37 is the Proton donor of the active site. Gln61 is a binding site for (R)-pantoate. Gln61 lines the beta-alanine pocket. Residue 147–150 (GMKD) coordinates ATP. Gln153 serves as a coordination point for (R)-pantoate. Residues Val176 and 184-187 (KSSR) contribute to the ATP site.

This sequence belongs to the pantothenate synthetase family. Homodimer.

It localises to the cytoplasm. The enzyme catalyses (R)-pantoate + beta-alanine + ATP = (R)-pantothenate + AMP + diphosphate + H(+). Its pathway is cofactor biosynthesis; (R)-pantothenate biosynthesis; (R)-pantothenate from (R)-pantoate and beta-alanine: step 1/1. Catalyzes the condensation of pantoate with beta-alanine in an ATP-dependent reaction via a pantoyl-adenylate intermediate. This chain is Pantothenate synthetase, found in Geobacillus sp. (strain WCH70).